The primary structure comprises 250 residues: 5'-nucleotidase SurE (250 aa).

A divalent metal cation is bound by residues aspartate 8, aspartate 9, serine 40, and asparagine 95.

The protein belongs to the SurE nucleotidase family. The cofactor is a divalent metal cation.

It localises to the cytoplasm. The enzyme catalyses a ribonucleoside 5'-phosphate + H2O = a ribonucleoside + phosphate. In terms of biological role, nucleotidase that shows phosphatase activity on nucleoside 5'-monophosphates. The protein is 5'-nucleotidase SurE of Nitratidesulfovibrio vulgaris (strain DP4) (Desulfovibrio vulgaris).